Here is a 441-residue protein sequence, read N- to C-terminus: Glutamyl-tRNA reductase (441 aa).

Residues 47-50 (TCNR), Ser104, 109-111 (EAQ), and Gln115 each bind substrate. The active-site Nucleophile is Cys48. 184–189 (GAGEMG) is a binding site for NADP(+).

It belongs to the glutamyl-tRNA reductase family. As to quaternary structure, homodimer.

The enzyme catalyses (S)-4-amino-5-oxopentanoate + tRNA(Glu) + NADP(+) = L-glutamyl-tRNA(Glu) + NADPH + H(+). It functions in the pathway porphyrin-containing compound metabolism; protoporphyrin-IX biosynthesis; 5-aminolevulinate from L-glutamyl-tRNA(Glu): step 1/2. Catalyzes the NADPH-dependent reduction of glutamyl-tRNA(Glu) to glutamate 1-semialdehyde (GSA). The protein is Glutamyl-tRNA reductase of Myxococcus xanthus (strain DK1622).